A 159-amino-acid polypeptide reads, in one-letter code: Protein-export protein SecB (159 aa).

This sequence belongs to the SecB family. In terms of assembly, homotetramer, a dimer of dimers. One homotetramer interacts with 1 SecA dimer.

Its subcellular location is the cytoplasm. In terms of biological role, one of the proteins required for the normal export of preproteins out of the cell cytoplasm. It is a molecular chaperone that binds to a subset of precursor proteins, maintaining them in a translocation-competent state. It also specifically binds to its receptor SecA. The chain is Protein-export protein SecB from Nitrobacter hamburgensis (strain DSM 10229 / NCIMB 13809 / X14).